A 568-amino-acid chain; its full sequence is Periplasmic pectate lyase (568 aa).

Positions 1-19 (MKRFALSLLAGLVALQASA) are cleaved as a signal peptide.

This sequence belongs to the polysaccharide lyase 2 family.

The protein resides in the periplasm. The enzyme catalyses Eliminative cleavage of (1-&gt;4)-alpha-D-galacturonan to give oligosaccharides with 4-deoxy-alpha-D-galact-4-enuronosyl groups at their non-reducing ends.. Its pathway is glycan metabolism; pectin degradation; 2-dehydro-3-deoxy-D-gluconate from pectin: step 2/5. This Pectobacterium carotovorum subsp. carotovorum (Erwinia carotovora subsp. carotovora) protein is Periplasmic pectate lyase (pelB).